Here is a 130-residue protein sequence, read N- to C-terminus: Holo-[acyl-carrier-protein] synthase (130 aa).

The Mg(2+) site is built by aspartate 8 and glutamate 62.

This sequence belongs to the P-Pant transferase superfamily. AcpS family. The cofactor is Mg(2+).

It localises to the cytoplasm. It catalyses the reaction apo-[ACP] + CoA = holo-[ACP] + adenosine 3',5'-bisphosphate + H(+). Functionally, transfers the 4'-phosphopantetheine moiety from coenzyme A to a Ser of acyl-carrier-protein. The polypeptide is Holo-[acyl-carrier-protein] synthase (Variovorax paradoxus (strain S110)).